Reading from the N-terminus, the 95-residue chain is uncharacterized protein (95 aa).

Residue K21 coordinates phosphate. Mg(2+) is bound at residue D44. N47 is a binding site for phosphate.

This sequence belongs to the HAD-like hydrolase superfamily. Cof family. It depends on Mg(2+) as a cofactor.

This is an uncharacterized protein from Geobacillus stearothermophilus (Bacillus stearothermophilus).